A 162-amino-acid polypeptide reads, in one-letter code: CD-NTase-associated protein 7 (162 aa).

The interval 138-162 (HSGLTQSGGREYSSNGYGMQRKDYN) is disordered. A compositionally biased stretch (polar residues) spans 139–154 (SGLTQSGGREYSSNGY).

The protein belongs to the HORMA family. HORMA1 subfamily. In terms of assembly, forms complexes with CdnC with 1:1 and 2:2 stoichimetry, and a 1:1:6 CdnC:Cap7:Cap6 complex.

In terms of biological role, sensor protein of a CBASS antivirus system. CBASS (cyclic oligonucleotide-based antiphage signaling system) provides immunity against bacteriophage. The CD-NTase protein synthesizes cyclic nucleotides in response to infection; these serve as specific second messenger signals. The signals activate a diverse range of effectors, leading to bacterial cell death and thus abortive phage infection. A type III CBASS system. Expression of this CBASS system (Cap18-Cap6-Cap7-CdnC-CapW-Cap17) in a susceptible E.coli (strain MG1655) confers resistance to bacteriophage P1. The sensor protein for this CBASS system. Binds to a closure peptide, which allows it to activate CdnC for second messenger synthesis. The chain is CD-NTase-associated protein 7 from Escherichia coli (strain KTE188).